Consider the following 354-residue polypeptide: D-alanine--D-alanine ligase (354 aa).

An ATP-grasp domain is found at arginine 154 to lysine 348. Methionine 181–glutamine 232 is an ATP binding site. Glutamate 301, glutamate 315, and asparagine 317 together coordinate Mg(2+).

It belongs to the D-alanine--D-alanine ligase family. It depends on Mg(2+) as a cofactor. Mn(2+) is required as a cofactor.

It is found in the cytoplasm. It carries out the reaction 2 D-alanine + ATP = D-alanyl-D-alanine + ADP + phosphate + H(+). Its pathway is cell wall biogenesis; peptidoglycan biosynthesis. Functionally, cell wall formation. In Rickettsia canadensis (strain McKiel), this protein is D-alanine--D-alanine ligase.